Consider the following 127-residue polypeptide: Ribonuclease P protein component (127 aa).

It belongs to the RnpA family. In terms of assembly, consists of a catalytic RNA component (M1 or rnpB) and a protein subunit.

It catalyses the reaction Endonucleolytic cleavage of RNA, removing 5'-extranucleotides from tRNA precursor.. Its function is as follows. RNaseP catalyzes the removal of the 5'-leader sequence from pre-tRNA to produce the mature 5'-terminus. It can also cleave other RNA substrates such as 4.5S RNA. The protein component plays an auxiliary but essential role in vivo by binding to the 5'-leader sequence and broadening the substrate specificity of the ribozyme. This is Ribonuclease P protein component from Rippkaea orientalis (strain PCC 8801 / RF-1) (Cyanothece sp. (strain PCC 8801)).